The following is a 113-amino-acid chain: UPF0145 protein SynWH7803_1684 (113 aa).

This sequence belongs to the UPF0145 family.

In Synechococcus sp. (strain WH7803), this protein is UPF0145 protein SynWH7803_1684.